A 119-amino-acid polypeptide reads, in one-letter code: MKIFSVALSMLRPVRFLIVAFTCALLFLSSTVPAFAISSYQSEPTEATDQLLETQKATDEVARSAPLGLKEVQKKSNEGLNEVQGVADINKQKRPANSQDSSSVEGDIQNFLEKVTGKN.

Positions 67-119 (LGLKEVQKKSNEGLNEVQGVADINKQKRPANSQDSSSVEGDIQNFLEKVTGKN) are disordered. Residues 95-104 (PANSQDSSSV) are compositionally biased toward polar residues.

This is an uncharacterized protein from Anabaena variabilis.